A 183-amino-acid polypeptide reads, in one-letter code: V-type ATP synthase subunit E (183 aa).

The protein belongs to the V-ATPase E subunit family.

In terms of biological role, produces ATP from ADP in the presence of a proton gradient across the membrane. This Fusobacterium nucleatum subsp. nucleatum (strain ATCC 25586 / DSM 15643 / BCRC 10681 / CIP 101130 / JCM 8532 / KCTC 2640 / LMG 13131 / VPI 4355) protein is V-type ATP synthase subunit E.